We begin with the raw amino-acid sequence, 1586 residues long: MKKHKFRETLKSFFEPHFDHEKGEMLKGTKTEIDEKVNKILGMVESGDVNEDESNRQVVADLVKEFYSEYQSLYRQYDDLTGEIRKKVNGKGESSSSSSSDSDSDHSSKRKVKRNGNGKVEKDVELVTGALKQQIEAANLEIADLKGKLTTTVEEKEAVDSELELALMKLKESEEISSKLKLETEKLEDEKSIALSDNRELHQKLEVAGKTETDLNQKLEDIKKERDELQTERDNGIKRFQEAEKVAEDWKTTSDQLKDETSNLKQQLEASEQRVSELTSGMNSAEEENKSLSLKVSEISDVIQQGQTTIQELISELGEMKEKYKEKESEHSSLVELHKTHERESSSQVKELEAHIESSEKLVADFTQSLNNAEEEKKLLSQKIAELSNEIQEAQNTMQELMSESGQLKESHSVKERELFSLRDIHEIHQRDSSTRASELEAQLESSKQQVSDLSASLKAAEEENKAISSKNVETMNKLEQTQNTIQELMAELGKLKDSHREKESELSSLVEVHETHQRDSSIHVKELEEQVESSKKLVAELNQTLNNAEEEKKVLSQKIAELSNEIKEAQNTIQELVSESGQLKESHSVKDRDLFSLRDIHETHQRESSTRVSELEAQLESSEQRISDLTVDLKDAEEENKAISSKNLEIMDKLEQAQNTIKELMDELGELKDRHKEKESELSSLVKSADQQVADMKQSLDNAEEEKKMLSQRILDISNEIQEAQKTIQEHMSESEQLKESHGVKERELTGLRDIHETHQRESSTRLSELETQLKLLEQRVVDLSASLNAAEEEKKSLSSMILEITDELKQAQSKVQELVTELAESKDTLTQKENELSSFVEVHEAHKRDSSSQVKELEARVESAEEQVKELNQNLNSSEEEKKILSQQISEMSIKIKRAESTIQELSSESERLKGSHAEKDNELFSLRDIHETHQRELSTQLRGLEAQLESSEHRVLELSESLKAAEEESRTMSTKISETSDELERTQIMVQELTADSSKLKEQLAEKESKLFLLTEKDSKSQVQIKELEATVATLELELESVRARIIDLETEIASKTTVVEQLEAQNREMVARISELEKTMEERGTELSALTQKLEDNDKQSSSSIETLTAEIDGLRAELDSMSVQKEEVEKQMVCKSEEASVKIKRLDDEVNGLRQQVASLDSQRAELEIQLEKKSEEISEYLSQITNLKEEIINKVKVHESILEEINGLSEKIKGRELELETLGKQRSELDEELRTKKEENVQMHDKINVASSEIMALTELINNLKNELDSLQVQKSETEAELEREKQEKSELSNQITDVQKALVEQEAAYNTLEEEHKQINELFKETEATLNKVTVDYKEAQRLLEERGKEVTSRDSTIGVHEETMESLRNELEMKGDEIETLMEKISNIEVKLRLSNQKLRVTEQVLTEKEEAFRKEEAKHLEEQALLEKNLTMTHETYRGMIKEIADKVNITVDGFQSMSEKLTEKQGRYEKTVMEASKILWTATNWVIERNHEKEKMNKEIEKKDEEIKKLGGKVREDEKEKEMMKETLMGLGEEKREAIRQLCVWIDHHRSRCEYLEEVLSKTVVARGQRRVSQRT.

The NAB domain maps to 10–84 (LKSFFEPHFD…RQYDDLTGEI (75 aa)). The interval 88-119 (VNGKGESSSSSSSDSDSDHSSKRKVKRNGNGK) is disordered. Coiled coils occupy residues 128 to 411 (TGAL…LKES), 437 to 1196 (ASEL…LKEE), 1225 to 1336 (LETL…TEAT), and 1372 to 1406 (MESL…SNQK). 5 LRR repeats span residues 173–187 (SEEI…TEKL), 188–210 (EDEK…VAGK), 216–239 (NQKL…GIKR), 261–285 (TSNL…MNSA), and 287–309 (EENK…GQTT). Positions 249-262 (DWKTTSDQLKDETS) are enriched in basic and acidic residues. The interval 249-286 (DWKTTSDQLKDETSNLKQQLEASEQRVSELTSGMNSAE) is disordered. The segment at 325–353 (KEKESEHSSLVELHKTHERESSSQVKELE) is disordered. 20 LRR repeats span residues 384-410 (IAEL…QLKE), 437-461 (ASEL…LKAA), 473-498 (VETM…KLKD), 560-586 (IAEL…QLKE), 613-637 (VSEL…LKDA), 649-674 (LEIM…ELKD), 768-792 (LSEL…LNAA), 824-850 (LAES…AHKR), 856-880 (VKEL…LNSS), 902-929 (ESTI…LFSL), 944-968 (LRGL…LKAA), 990-1014 (QIMV…ESKL), 1077-1101 (ISEL…LEDN), 1120-1144 (RAEL…SEEA), 1195-1220 (EEII…KIKG), 1247-1272 (VQMH…NLKN), 1372-1396 (MESL…ISNI), 1398-1417 (VKLR…LTEK), 1426-1448 (AKHL…TYRG), and 1450-1474 (IKEI…LTEK). The segment at 430–456 (QRDSSTRASELEAQLESSKQQVSDLSA) is disordered. Over residues 444 to 455 (LESSKQQVSDLS) the composition is skewed to polar residues. Residues 965–985 (LKAAEEESRTMSTKISETSDE) are disordered. Positions 1496 to 1530 (VIERNHEKEKMNKEIEKKDEEIKKLGGKVREDEKE) form a coiled coil.

As to quaternary structure, interacts with COP1 coiled-coil region. As to expression, mainly expressed in photosynthetic and vascular tissues. Accumulates in both dark-grown and light-grown seedlings roots and shoots, leaves and flowers (at protein level).

It is found in the cell membrane. It localises to the cytoplasm. The protein resides in the cytoskeleton. Its function is as follows. Positive regulator of abscisic acid (ABA)-mediated signaling pathways involved in abiotic stress responses (e.g. osmotic stress) and leading to various plant adaptation (e.g. stomata closure). The polypeptide is COP1-interactive protein 1 (Arabidopsis thaliana (Mouse-ear cress)).